We begin with the raw amino-acid sequence, 147 residues long: UPF0735 ACT domain-containing protein BH1214 (147 aa).

In terms of domain architecture, ACT spans 70 to 145 (TLSINLEDRS…AVEKVELVGS (76 aa)).

Belongs to the UPF0735 family.

In Halalkalibacterium halodurans (strain ATCC BAA-125 / DSM 18197 / FERM 7344 / JCM 9153 / C-125) (Bacillus halodurans), this protein is UPF0735 ACT domain-containing protein BH1214.